A 562-amino-acid polypeptide reads, in one-letter code: MNNDKRPLYIPYAGPALLATPLLNKGSAFSGEERSSFNLEGLLPETTETIQEQVERAYQQYKSFESDMDKHIYLRNIQDTNETLYYRLVQNHISEMMPIIYTPTVGAACENFSNIYRRGRGLFISYPNRDRIDDLLNNAANHNVKVIVVTDGERILGLGDQGIGGMGIPIGKLSLYTACGGISPAYTLPIVLDVGTNNPQRLADPMYMGWRHPRITGPDYDAFVEEFIQAVQRRWPDALIQFEDFAQKNAMPLLERYKDRICCFNDDIQGTAAVTVGSLLAACKAAGTKLSDQRITFLGAGSAGCGIAEAIIAQMVSEGISDEKARSQVYMVDRWGLLQEGMPNLLDFQQRLVQKFDNTKKWENEGNGFSLLDVMHNAKPTILIGVSGAPGLFSEEVIKEMHKHCKRPIVFPLSNPTSRVEATPNDIIRWTNGEALVATGSPFEPVVHEGRSYPIAQCNNSYIFPGIGLGVLAVNAKRVTDEMLMESSRALATCSPLAINGNGALLPPLEEIHLVSKKIAFAVAKKAIEQGVALEITDEALNDAIDQAFWQPVYRRYKRTAF.

Y101 (proton donor) is an active-site residue. R154 provides a ligand contact to NAD(+). Residue K172 is the Proton acceptor of the active site. A divalent metal cation contacts are provided by E243, D244, and D267. Residues D267 and N415 each contribute to the NAD(+) site.

Belongs to the malic enzymes family. In terms of assembly, homotetramer. Mg(2+) serves as cofactor. It depends on Mn(2+) as a cofactor.

It catalyses the reaction (S)-malate + NAD(+) = pyruvate + CO2 + NADH. The enzyme catalyses oxaloacetate + H(+) = pyruvate + CO2. This chain is NAD-dependent malic enzyme, found in Vibrio campbellii (strain ATCC BAA-1116).